A 100-amino-acid chain; its full sequence is MTMKYFCSVMIAIALVGCTATPPPTQKAQQSKVSPTRTLDMEALCKAQAAQRYNTGAQKIAVTGFEQFQGSYEMRGNTFRKESFVCSFDADGQFLHLSMR.

An N-terminal signal peptide occupies residues 1–17 (MTMKYFCSVMIAIALVG). Cys18 is lipidated: N-palmitoyl cysteine. Cys18 carries the S-diacylglycerol cysteine lipid modification.

The protein resides in the cell membrane. This is an uncharacterized protein from Salmonella paratyphi A (strain ATCC 9150 / SARB42).